We begin with the raw amino-acid sequence, 350 residues long: Tsukushi (350 aa).

The N-terminal stretch at 1–17 (MAPSWLFLLFIPGMVGS) is a signal peptide. The 42-residue stretch at 18 to 59 (SRSCFPGCQCIVDNFGLFHSFSLTKVDCSGVGPHVVPVSIPL) folds into the LRRNT domain. LRR repeat units follow at residues 60 to 81 (DTSY…VLSG), 86 to 107 (TLIN…TFSK), 110 to 131 (YLES…SFLY), 133 to 154 (RLTE…AFTL), 159 to 180 (RSMT…AERP), 183 to 203 (NIHS…LHGI), 204 to 225 (PLRH…SFLG), 228 to 250 (GLTH…SFKT), 253 to 275 (SLLD…MFFG), and 278 to 299 (SLQE…IMLN). Asparagine 75 and asparagine 91 each carry an N-linked (GlcNAc...) asparagine glycan.

Interacts with bmp4. Interacts with dll1 (via extracellular region). Interacts with fgf8; inhibits fgf8 signaling. Interacts with nodal2/Xnr2; enhances nodal2 activity.

Its subcellular location is the secreted. Functionally, contributes to various developmental events through its interactions with multiple signaling pathways. Dorsalizing factor which functions as an inhibitor of bone morphogenetic proteins (BMP) during gastrulation. Promotes dll1-dependent activation of Notch signaling and is required for neural crest formation. Induces endoderm and dorsal mesoderm formation by enhancing nodal2/Xnr2 activity while inhibiting ventrolateral mesoderm formation through inhibition of fgf8. The sequence is that of Tsukushi (tsku) from Xenopus tropicalis (Western clawed frog).